The primary structure comprises 381 residues: Phthiodiolone/phenolphthiodiolone dimycocerosates ketoreductase (381 aa).

It belongs to the mer family. Phthiodiolone/phenolphthiodiolone dimycocerosates ketoreductase subfamily.

Its function is as follows. Catalyzes the reduction of the keto moiety of phthiodiolone dimycocerosates (DIM B) and glycosylated phenolphthiodiolone dimycocerosates to form the intermediate compounds phthiotriol and glycosylated phenolphthiotriol dimycocerosates during phthiocerol dimycocerosates (DIM A) and glycosylated phenolphthiocerol dimycocerosates (PGL) biosynthesis. The chain is Phthiodiolone/phenolphthiodiolone dimycocerosates ketoreductase from Mycobacterium tuberculosis (strain CDC 1551 / Oshkosh).